The sequence spans 380 residues: uncharacterized protein (380 aa).

Positions 251–275 (NMSERPPTPSHDTASSSTSTDPNPL) are disordered. Positions 260–272 (SHDTASSSTSTDP) are enriched in low complexity.

This is an uncharacterized protein from Allium cepa var. aggregatum (Shallot).